The following is a 961-amino-acid chain: Copper-exporting P-type ATPase (961 aa).

2 consecutive HMA domains span residues 3–64 (QTTL…YQAT) and 69–130 (PDVE…YHAT). Cu(+)-binding residues include Cys14, Cys17, Cys80, and Cys83. Disordered stretches follow at residues 131–153 (QQGIDSPKTEPLTHSAQSQPESL) and 178–201 (VLPTNTALPTNTTSTTSTADTASA). Residues 142–151 (LTHSAQSQPE) are compositionally biased toward polar residues. Residues 226-289 (ESVQLLLTGM…AVKNAGYGAE (64 aa)) enclose the HMA 3 domain. Cu(+) contacts are provided by Cys237 and Cys240. 5 helical membrane passes run 316 to 336 (AALGLLLGIPLMAWGLFGGSM), 345 to 365 (PWLIIGIITLLVMIFAGGHFY), 381 to 401 (TLVALGTGAAWIYSITVNIWP), 565 to 585 (AVFVPTVVVIAIVAGLIWYFF), and 592 to 612 (VYTLVVATTVLIIACPCALGL). Residue Asp650 is the 4-aspartylphosphate intermediate of the active site. Mg(2+)-binding residues include Asp847 and Asp851. A run of 3 helical transmembrane segments spans residues 860-880 (VGIAMGGGSDIAIETAAITLM), 906-926 (LGAFFYNALGIPIAAGILYPF), and 928-948 (GTLLSPVVAGAAMALSSITVV).

It belongs to the cation transport ATPase (P-type) (TC 3.A.3) family. Type IB subfamily.

The protein localises to the cell membrane. The enzyme catalyses Cu(+)(in) + ATP + H2O = Cu(+)(out) + ADP + phosphate + H(+). Functionally, involved in copper export. The sequence is that of Copper-exporting P-type ATPase (copA) from Yersinia pestis.